We begin with the raw amino-acid sequence, 763 residues long: High glucose sensor RGT2 (763 aa).

A disordered region spans residues 1-28; sequence MNDSQNCLRQREENSHLNPGNDFGHHQG. The Cytoplasmic segment spans residues 1-99; it reads MNDSQNCLRQ…PLPLRSNVMS (99 aa). Residues 100–120 form a helical membrane-spanning segment; sequence VLVGIFVAVGGFLFGYDTGLI. Topologically, residues 121-144 are extracellular; that stretch reads NSITDMPYVKTYIAPNHSYFTTSQ. Asn-136 carries an N-linked (GlcNAc...) asparagine glycan. Residues 145–165 traverse the membrane as a helical segment; that stretch reads IAILVSFLSLGTFFGALIAPY. At 166 to 175 the chain is on the cytoplasmic side; the sequence is ISDSYGRKPT. A helical transmembrane segment spans residues 176–196; the sequence is IMFSTAVIFSIGNSLQVASGG. Residue Leu-197 is a topological domain, extracellular. Residues 198 to 218 traverse the membrane as a helical segment; it reads VLLIVGRVISGIGIGIISAVV. Topologically, residues 219–231 are cytoplasmic; the sequence is PLYQAEAAQKNLR. A helical transmembrane segment spans residues 232–252; sequence GAIISSYQWAITIGLLVSSAV. At 253 to 266 the chain is on the extracellular side; that stretch reads SQGTHSKNGPSSYR. A helical transmembrane segment spans residues 267-287; the sequence is IPIGLQYVWSSILAVGMIFLP. At 288-357 the chain is on the cytoplasmic side; it reads ESPRYYVLKD…SENRPKQILR (70 aa). Residues 358-378 form a helical membrane-spanning segment; it reads IFTGIAIQAFQQASGINFIFY. Over 379-393 the chain is Extracellular; the sequence is YGVNFFNNTGVDNSY. An N-linked (GlcNAc...) asparagine glycan is attached at Asn-385. The chain crosses the membrane as a helical span at residues 394–414; sequence LVSFISYAVNVAFSIPGMYLV. Over 415–421 the chain is Cytoplasmic; it reads DRIGRRP. A helical transmembrane segment spans residues 422–442; the sequence is VLLAGGVIMAIANLVIAIVGV. Over 443-452 the chain is Extracellular; it reads SEGKTVVASK. Residues 453 to 473 form a helical membrane-spanning segment; sequence IMIAFICLFIAAFSATWGGVV. At 474–491 the chain is on the cytoplasmic side; the sequence is WVVSAELYPLGVRSKCTA. Residues 492–512 traverse the membrane as a helical segment; sequence ICAAANWLVNFTCALITPYIV. The Extracellular portion of the chain corresponds to 513–524; sequence DVGSHTSSMGPK. Residues 525–545 form a helical membrane-spanning segment; that stretch reads IFFIWGGLNVVAVIVVYFAVY. At 546-763 the chain is on the cytoplasmic side; sequence ETRGLTLEEI…SKHSQYTSPQ (218 aa). Low complexity predominate over residues 725–737; it reads SSTTSNDTSFSPS. Positions 725 to 763 are disordered; that stretch reads SSTTSNDTSFSPSHNSNARTSSNWTSDLASKHSQYTSPQ. Over residues 738–763 the composition is skewed to polar residues; the sequence is HNSNARTSSNWTSDLASKHSQYTSPQ.

It belongs to the major facilitator superfamily. Sugar transporter (TC 2.A.1.1) family. In terms of assembly, interacts with YCK1. Interacts with MTH1 and STD1. Post-translationally, phosphorylated in the C-terminal tail on Yck consensus sites in a yeast casein kinases YCK1 and YCK2 (Yck)-dependent manner. This phosphorylation is required for interaction with HXT corepressors MTH1 and STD1 and ultimately HXT expression.

Its subcellular location is the cell membrane. Low-affinity high glucose sensor that is part of the sensor/receptor-repressor (SSR) glucose-signaling pathway, which detects extracellular glucose and induces expression of glucose transporters that bring glucose into the cell. The transporter-like sensor generates an intracellular signal in the presence of high levels of glucose to promote high glucose-induced expression of HXT1. Binding of glucose to the RGT2 transmembrane domain activates a downstream signaling cascade, leading to phosphorylation of the RGT1 corepressors MTH1 and STD1, targeting them for SCF(Grr1)-dependent ubiquitination and degradation. Depletion of the corepressors robs RGT1 of its ability to repress expression of HXT genes, leading to accumulation of glucose transporters in the plasma membrane. Even though RGT2 is similar to glucose transporters, it appears to be unable to transport glucose. This chain is High glucose sensor RGT2, found in Saccharomyces cerevisiae (strain ATCC 204508 / S288c) (Baker's yeast).